The sequence spans 486 residues: MKFFDITVTELHQKLVDKELTVTELVSETLDQIEADQKVLNDFVTINREGALAQARAIDEKGINPDNIWAGIPIAIKDNIVTKGIKTTAASKMLSNFTPIYDATVIERLQANDVIIIGKTNMDEFAMGGSTETSYFGDTRNPWDHTKVPGGSSGGSATTVSAGNSIAALGSDTGGSIRQPASYTGIVGVKPTYGRISRYGLIAFGSSLDQIGPMTRTVKDNAALLNIIAGMDERDLTSSDKKVPDFTSKIGKDIKGMKIGLPKEYLGDGINEDVKKVVRQAVETLTNLGATIEEISLPRSKYGVAAYYIIGSSEASSNLQRFDGIRYGHRAQDVKNLEDVYVKSRSEGFGDEVKRRIMLGTYSLSAGTYDAYFKKAAQVRTLIINDFNKIFEDYDLIIGPTAPTPAYAIGAEVDDPTTMYMNDVLTIPVNLAGLPAMSVPAGFSDNMPVGLQIIAKPFDEETMYQAGAAFEAATEVHSKHPEMEDK.

Catalysis depends on charge relay system residues Lys77 and Ser152. Ser176 (acyl-ester intermediate) is an active-site residue.

This sequence belongs to the amidase family. GatA subfamily. Heterotrimer of A, B and C subunits.

It catalyses the reaction L-glutamyl-tRNA(Gln) + L-glutamine + ATP + H2O = L-glutaminyl-tRNA(Gln) + L-glutamate + ADP + phosphate + H(+). Functionally, allows the formation of correctly charged Gln-tRNA(Gln) through the transamidation of misacylated Glu-tRNA(Gln) in organisms which lack glutaminyl-tRNA synthetase. The reaction takes place in the presence of glutamine and ATP through an activated gamma-phospho-Glu-tRNA(Gln). The polypeptide is Glutamyl-tRNA(Gln) amidotransferase subunit A (Pediococcus pentosaceus (strain ATCC 25745 / CCUG 21536 / LMG 10740 / 183-1w)).